Here is a 998-residue protein sequence, read N- to C-terminus: SEC23-interacting protein (998 aa).

The segment at 1–363 (MADRKANGGG…YTEEFSEKLE (363 aa)) is interaction with SEC23A. The interval 50–246 (LPGEDSTDVG…AQQQVPARPA (197 aa)) is disordered. Positions 54–63 (DSTDVGEEDS) are enriched in acidic residues. Positions 65–78 (LGQTSTHTSTPQTF) are enriched in polar residues. The span at 79–88 (SYFSQVSSSS) shows a compositional bias: low complexity. Polar residues-rich tracts occupy residues 94–108 (IGQS…SAGQ), 143–158 (PPSQ…SQPS), and 232–241 (AMQSPAQQQV). Ser-600 is modified (phosphoserine). Positions 640 to 703 (EEPLTLHGTL…NFVKLKAAKL (64 aa)) constitute an SAM domain. Residues 720–742 (TKGQDESAPKTKEMASPSSESNE) form a disordered region. Residues 722-732 (GQDESAPKTKE) show a composition bias toward basic and acidic residues. Phosphoserine occurs at positions 735, 748, and 924. Residues 777–987 (LDFEPEIFFA…ALLLLKEIYR (211 aa)) form the DDHD domain.

Belongs to the PA-PLA1 family. In terms of assembly, interacts with SEC23A.

The protein resides in the cytoplasmic vesicle. It localises to the COPII-coated vesicle membrane. It is found in the endoplasmic reticulum. Functionally, plays a role in the organization of endoplasmic reticulum exit sites. Specifically binds to phosphatidylinositol 3-phosphate (PI(3)P), phosphatidylinositol 4-phosphate (PI(4)P) and phosphatidylinositol 5-phosphate (PI(5)P). In Mus musculus (Mouse), this protein is SEC23-interacting protein (Sec23ip).